The chain runs to 362 residues: Ribosome-binding ATPase YchF (362 aa).

Positions 3 to 255 constitute an OBG-type G domain; it reads FKCGIIGLPN…MSDEEKKSFM (253 aa). 12–17 contacts ATP; the sequence is NVGKST. Serine 16 and threonine 36 together coordinate Mg(2+). Positions 277 to 360 constitute a TGS domain; the sequence is NLITFFTVGD…QDGDIIHFLF (84 aa).

It belongs to the TRAFAC class OBG-HflX-like GTPase superfamily. OBG GTPase family. YchF/OLA1 subfamily. The cofactor is Mg(2+).

ATPase that binds to both the 70S ribosome and the 50S ribosomal subunit in a nucleotide-independent manner. The sequence is that of Ribosome-binding ATPase YchF from Buchnera aphidicola subsp. Acyrthosiphon pisum (strain APS) (Acyrthosiphon pisum symbiotic bacterium).